The primary structure comprises 447 residues: Tryptophan synthase beta chain (447 aa).

Lys-92 is modified (N6-(pyridoxal phosphate)lysine). A disordered region spans residues 408–447 (GLAVKGGEQPKEFSDGPPLGKLAPSGGSAVREATSVGARK).

The protein belongs to the TrpB family. In terms of assembly, tetramer of two alpha and two beta chains. It depends on pyridoxal 5'-phosphate as a cofactor.

It catalyses the reaction (1S,2R)-1-C-(indol-3-yl)glycerol 3-phosphate + L-serine = D-glyceraldehyde 3-phosphate + L-tryptophan + H2O. It functions in the pathway amino-acid biosynthesis; L-tryptophan biosynthesis; L-tryptophan from chorismate: step 5/5. Its function is as follows. The beta subunit is responsible for the synthesis of L-tryptophan from indole and L-serine. The polypeptide is Tryptophan synthase beta chain (Polaromonas sp. (strain JS666 / ATCC BAA-500)).